We begin with the raw amino-acid sequence, 143 residues long: Transcription antitermination protein NusB (143 aa).

Belongs to the NusB family.

Involved in transcription antitermination. Required for transcription of ribosomal RNA (rRNA) genes. Binds specifically to the boxA antiterminator sequence of the ribosomal RNA (rrn) operons. The protein is Transcription antitermination protein NusB of Clostridium botulinum (strain Kyoto / Type A2).